Reading from the N-terminus, the 174-residue chain is Transcription antitermination protein NusB (174 aa).

The protein belongs to the NusB family.

In terms of biological role, involved in transcription antitermination. Required for transcription of ribosomal RNA (rRNA) genes. Binds specifically to the boxA antiterminator sequence of the ribosomal RNA (rrn) operons. This is Transcription antitermination protein NusB from Rhodopseudomonas palustris (strain TIE-1).